The following is a 380-amino-acid chain: GDP-mannose:cellobiosyl-diphosphopolyprenol alpha-mannosyltransferase (380 aa).

The protein belongs to the glycosyltransferase group 1 family. Glycosyltransferase 4 subfamily.

The enzyme catalyses beta-D-Glc-(1-&gt;4)-alpha-D-Glc-di-trans,octa-cis-undecaprenyl diphosphate + GDP-alpha-D-mannose = alpha-D-Man-(1-&gt;3)-beta-D-Glc-(1-&gt;4)-alpha-D-Glc-1-di-trans,octa-cis-undecaprenyl diphosphate + GDP + H(+). Its function is as follows. Involved in the biosynthesis of the exopolysaccharide xanthan, a polymer that is comprised of repeating pentasaccharide units with the structure of a beta-(1,4)-linked D-glucose backbone with trisaccharide side chains composed of mannose-beta-(1,4)-glucuronic acid-beta-(1,2)-mannose attached to alternate glucose residues in the backbone by alpha-(1,3) linkages. Xanthan is involved in pathogenicity but has also been used in a variety of applications as a specialty polymer for commercial applications, including food additives, where they act as viscosifying, stabilizing, emulsifying, or gelling agents. The chain is GDP-mannose:cellobiosyl-diphosphopolyprenol alpha-mannosyltransferase (gumH) from Xanthomonas oryzae pv. oryzae (strain PXO99A).